The sequence spans 271 residues: Phosphatidylinositol transfer protein alpha isoform (271 aa).

A 1,2-diacyl-sn-glycero-3-phospho-(1D-myo-inositol) is bound by residues T59, K61, E86, N90, T97, and K195. Residue K216 is modified to N6-acetyllysine. The segment covering 251–264 (TKRQLDEMRQKDPV) has biased composition (basic and acidic residues). A disordered region spans residues 251–271 (TKRQLDEMRQKDPVKGMTADD).

This sequence belongs to the PtdIns transfer protein family. PI transfer class I subfamily. Post-translationally, phosphorylated by PKC in a calcium and phosphatidylserine-dependent manner.

It localises to the cytoplasm. The protein resides in the nucleus. It carries out the reaction a 1,2-diacyl-sn-glycero-3-phosphocholine(in) = a 1,2-diacyl-sn-glycero-3-phosphocholine(out). The enzyme catalyses a 1,2-diacyl-sn-glycero-3-phospho-(1D-myo-inositol)(in) = a 1,2-diacyl-sn-glycero-3-phospho-(1D-myo-inositol)(out). Its function is as follows. Catalyzes the transfer of phosphatidylinositol (PI) and phosphatidylcholine (PC) between membranes. Shows a preference for PI and PC containing shorter saturated or monosaturated acyl chains at the sn-1 and sn-2 positions. Preference order for PC is C16:1 &gt; C16:0 &gt; C18:1 &gt; C18:0 &gt; C20:4 and for PI is C16:1 &gt; C16:0 &gt; C18:1 &gt; C18:0 &gt; C20:4 &gt; C20:3. This chain is Phosphatidylinositol transfer protein alpha isoform (Pitpna), found in Mus musculus (Mouse).